A 332-amino-acid chain; its full sequence is L-lactate dehydrogenase A chain (332 aa).

NAD(+) contacts are provided by residues 29–57 (GMVG…MEDK) and Arg-99. Residues Arg-106, Asn-138, and Arg-169 each coordinate substrate. Asn-138 is a binding site for NAD(+). His-193 functions as the Proton acceptor in the catalytic mechanism. Substrate is bound at residue Thr-248.

This sequence belongs to the LDH/MDH superfamily. LDH family. Homotetramer.

The protein localises to the cytoplasm. The enzyme catalyses (S)-lactate + NAD(+) = pyruvate + NADH + H(+). The protein operates within fermentation; pyruvate fermentation to lactate; (S)-lactate from pyruvate: step 1/1. Functionally, interconverts simultaneously and stereospecifically pyruvate and lactate with concomitant interconversion of NADH and NAD(+). The chain is L-lactate dehydrogenase A chain (ldha) from Sphyraena idiastes (Pelican barracuda).